A 492-amino-acid polypeptide reads, in one-letter code: Glutamyl-tRNA(Gln) amidotransferase subunit B, mitochondrial (492 aa).

The protein belongs to the GatB/GatE family. GatB subfamily. As to quaternary structure, subunit of the heterotrimeric GatFAB amidotransferase (AdT) complex, composed of A, B and F subunits.

The protein resides in the mitochondrion. The catalysed reaction is L-glutamyl-tRNA(Gln) + L-glutamine + ATP + H2O = L-glutaminyl-tRNA(Gln) + L-glutamate + ADP + phosphate + H(+). In terms of biological role, allows the formation of correctly charged Gln-tRNA(Gln) through the transamidation of misacylated Glu-tRNA(Gln) in the mitochondria. The reaction takes place in the presence of glutamine and ATP through an activated gamma-phospho-Glu-tRNA(Gln). The sequence is that of Glutamyl-tRNA(Gln) amidotransferase subunit B, mitochondrial from Komagataella phaffii (strain GS115 / ATCC 20864) (Yeast).